The chain runs to 312 residues: MKVAVLGAAGGIGQALALLLKTQLPAGSELSLYDIAPVTPGVAVDLSHIPTDVTITGFSGIDPTAALVGADVVLISAGVARKPGMDRSDLFNINAGIIKNLASKCAEVCPTACIGIITNPVNTTVPIAAEVLKQAGVYDKRKLFGITTLDVIRSETFVSALKGISLADVAVPVIGGHSGATILPLLSQVKGVEFTAEEIATLTTRIQNAGTEVVEAKAGGGSATLSMGHAAARFGLSLVRALQGEKGIVECTYVDGGSEHATFFAQPVLLGKNGVEEVLAYGDLSDFETNARDAMLEELKANITLGEEFVAG.

NAD(+)-binding positions include 7–13 (GAAGGIG) and Asp-34. Residues Arg-81 and Arg-87 each coordinate substrate. NAD(+)-binding positions include Asn-94 and 117 to 119 (ITN). 2 residues coordinate substrate: Asn-119 and Arg-153. The active-site Proton acceptor is His-177. Met-227 provides a ligand contact to NAD(+).

The protein belongs to the LDH/MDH superfamily. MDH type 1 family. In terms of assembly, homodimer.

The catalysed reaction is (S)-malate + NAD(+) = oxaloacetate + NADH + H(+). Its function is as follows. Catalyzes the reversible oxidation of malate to oxaloacetate. The sequence is that of Malate dehydrogenase (mdh) from Moritella sp. (strain 2D2).